The primary structure comprises 447 residues: Probable glycine dehydrogenase (decarboxylating) subunit 1 (447 aa).

This sequence belongs to the GcvP family. N-terminal subunit subfamily. The glycine cleavage system is composed of four proteins: P, T, L and H. In this organism, the P 'protein' is a heterodimer of two subunits.

The catalysed reaction is N(6)-[(R)-lipoyl]-L-lysyl-[glycine-cleavage complex H protein] + glycine + H(+) = N(6)-[(R)-S(8)-aminomethyldihydrolipoyl]-L-lysyl-[glycine-cleavage complex H protein] + CO2. In terms of biological role, the glycine cleavage system catalyzes the degradation of glycine. The P protein binds the alpha-amino group of glycine through its pyridoxal phosphate cofactor; CO(2) is released and the remaining methylamine moiety is then transferred to the lipoamide cofactor of the H protein. In Bacillus cereus (strain AH187), this protein is Probable glycine dehydrogenase (decarboxylating) subunit 1.